A 649-amino-acid polypeptide reads, in one-letter code: Acetyl-coenzyme A synthetase (649 aa).

CoA-binding positions include 190 to 193 (RGGR) and threonine 310. ATP-binding positions include 386–388 (GEP), 410–415 (DTWWQT), aspartate 499, and arginine 514. Serine 522 is a CoA binding site. Arginine 525 contacts ATP. Mg(2+)-binding residues include valine 536, histidine 538, and valine 541. Arginine 583 is a binding site for CoA. The residue at position 608 (lysine 608) is an N6-acetyllysine.

The protein belongs to the ATP-dependent AMP-binding enzyme family. It depends on Mg(2+) as a cofactor. Acetylated. Deacetylation by the SIR2-homolog deacetylase activates the enzyme.

The catalysed reaction is acetate + ATP + CoA = acetyl-CoA + AMP + diphosphate. Functionally, catalyzes the conversion of acetate into acetyl-CoA (AcCoA), an essential intermediate at the junction of anabolic and catabolic pathways. AcsA undergoes a two-step reaction. In the first half reaction, AcsA combines acetate with ATP to form acetyl-adenylate (AcAMP) intermediate. In the second half reaction, it can then transfer the acetyl group from AcAMP to the sulfhydryl group of CoA, forming the product AcCoA. This chain is Acetyl-coenzyme A synthetase, found in Methylorubrum extorquens (strain PA1) (Methylobacterium extorquens).